The following is a 384-amino-acid chain: BarH-like 2 homeobox protein (384 aa).

3 disordered regions span residues 1–134, 154–235, and 364–384; these read MTAM…APRT, CAPY…ARTA, and PGGQPALNPLSNPIPGTPHPR. Composition is skewed to low complexity over residues 101–110 and 119–134; these read VPAQSLQPSP and QSAAQQLGSAAAAPRT. Residues 157–175 are compositionally biased toward polar residues; the sequence is YSTSVSSPHHTPKQESNAA. The span at 177 to 217 shows a compositional bias: basic and acidic residues; the sequence is ESFRPKLEQEDGKTKLDKREDPQSDIKCHGTKEEGDREITS. The homeobox DNA-binding region spans 229–288; the sequence is PRKARTAFSDHQLNQLERSFERQKYLSVQDRMDLAAALNLTDTQVKTWYQNRRTKWKRQT.

This sequence belongs to the BAR homeobox family.

It localises to the nucleus. Potential regulator of neural basic helix-loop-helix genes. It may down-regulate expression of ASCL1 and, within the thalamus, up-regulate NGN2, thereby regulating distinct patterns of neuronal differentiation. This Mus musculus (Mouse) protein is BarH-like 2 homeobox protein (Barhl2).